The sequence spans 1039 residues: MLKTEKILHLKARGRSVRAVREHYLREDVRCGSALCLTCPRDGKLLSEDLTHYVVPDCQILQDYLEVLEFPELRGIIIMQTACQSVQHQRGRRQYKRLCSLLRDTRHDCILFSNEFQNHAYLPREMGESALAWQTRCIYNSCVWYYQHCQKKIPVVMVTEDKSVIRQYNTETQEVYVVSFQIYLETFWPNLKGALELYKSLKETHRERELESREGNGKEYPEHLPLEILEAGIKSGRYQQGVLSVNKHRAQLEGFVRLQGLGGKETDIQSDILIYGTKPRNRAIHGDLVAVELLSRSEWKGRNGALCENETDEKAVDAQAEVMPTGRVVGILQRNWRDYVATFPAKEDIETQGKNAQRVLVMPWDYRIPKIRISTQQAEALQDYRVVVRIDSWESTSLYPNGHFVRVLGRTGNLEAEIATILVENSISVNPFSEAQLAEMPSNTPESPWQVKPEEGDRLDLRKTHLVFSIDPKGCEDVDDALSIRKLPSGHLELGVHIADVTHFVPPNTYTDIEARSRATTYYLADRRYDMLPLILSADLCSLLGGVDRYAVSVIWEMDSSTYEIRRVWYGRTIIRSSYKLSYEVAQQLMDGDLEPLNTEMELHPLKQDPVRLEQLLWAVGKLTEVAHATRMRRDMSGALELEGVEVRVQLGEKHSIDDLVPKQPLQMHETIAECMILANHWVAKKIWECYPQHALLRLHPPARQEFFQELKECAKARGFSIDTRSNKALADSLDQANDPSDPLVNQLLRMMATQAMSNARYFSTGSYTEDEFYHYGLALEKYTHFTSPIRRYADIVVHRLLLAAVNKGPKDNLLGNKDLEELCRHINVRNRAAQHCQKQSTELFQCMFFKDKDPDSDQRCISDAVIYGIRTNGVLLFLPRYGIKGAAYLKNIDGLVLACKDNGRCHWMPGSLQRLPDRIVVTTQEAKSFSYCLFDHVTVRIHVQSSRFHPDSIRLEIIRNRPHSSQEALPSASNPQLARSELVKEVTRTAVEAQLAVEGAEELKPVEHYQEYRQTQGQSLYSMLEELWDLALLDVSGA.

A CSD1 domain is found at 221-309 (PEHLPLEILE…KGRNGALCEN (89 aa)). Positions 359-425 (VLVMPWDYRI…AEIATILVEN (67 aa)) constitute a CSD2 domain. An RNB domain is found at 458–807 (RLDLRKTHLV…VHRLLLAAVN (350 aa)).

The protein belongs to the RNR ribonuclease family. In terms of assembly, component of the RNA exosome complex. It depends on Mg(2+) as a cofactor.

The protein resides in the cytoplasm. It catalyses the reaction Exonucleolytic cleavage in the 3'- to 5'-direction to yield nucleoside 5'-phosphates.. Catalytic component of the RNA exosome complex which has 3'-&gt;5' exoribonuclease activity and participates in a multitude of cellular RNA processing and degradation events. The protein is DIS3-like exonuclease 1 (dis3l) of Xenopus tropicalis (Western clawed frog).